We begin with the raw amino-acid sequence, 358 residues long: Methylthioribose-1-phosphate isomerase (358 aa).

Substrate-binding positions include 54–56 (RGA), arginine 96, and glutamine 205. Catalysis depends on aspartate 246, which acts as the Proton donor. 256–257 (NK) contacts substrate.

The protein belongs to the eIF-2B alpha/beta/delta subunits family. MtnA subfamily.

The catalysed reaction is 5-(methylsulfanyl)-alpha-D-ribose 1-phosphate = 5-(methylsulfanyl)-D-ribulose 1-phosphate. It functions in the pathway amino-acid biosynthesis; L-methionine biosynthesis via salvage pathway; L-methionine from S-methyl-5-thio-alpha-D-ribose 1-phosphate: step 1/6. Catalyzes the interconversion of methylthioribose-1-phosphate (MTR-1-P) into methylthioribulose-1-phosphate (MTRu-1-P). The sequence is that of Methylthioribose-1-phosphate isomerase from Pseudomonas fluorescens (strain Pf0-1).